A 322-amino-acid polypeptide reads, in one-letter code: tRNA-dihydrouridine(16) synthase (322 aa).

FMN-binding positions include proline 7–glutamate 9 and glutamine 68. The active-site Proton donor is cysteine 98. FMN-binding positions include lysine 139, asparagine 200 to glutamate 202, and cysteine 224 to arginine 225.

The protein belongs to the Dus family. DusC subfamily. FMN serves as cofactor.

The catalysed reaction is 5,6-dihydrouridine(16) in tRNA + NADP(+) = uridine(16) in tRNA + NADPH + H(+). It catalyses the reaction 5,6-dihydrouridine(16) in tRNA + NAD(+) = uridine(16) in tRNA + NADH + H(+). Its function is as follows. Catalyzes the synthesis of 5,6-dihydrouridine (D), a modified base found in the D-loop of most tRNAs, via the reduction of the C5-C6 double bond in target uridines. Specifically modifies U16 in tRNAs. The chain is tRNA-dihydrouridine(16) synthase from Vibrio parahaemolyticus serotype O3:K6 (strain RIMD 2210633).